The primary structure comprises 159 residues: Ribosomal RNA large subunit methyltransferase H (159 aa).

S-adenosyl-L-methionine is bound by residues L76, G107, and 126-131 (LSKLTM).

It belongs to the RNA methyltransferase RlmH family. In terms of assembly, homodimer.

It is found in the cytoplasm. The catalysed reaction is pseudouridine(1915) in 23S rRNA + S-adenosyl-L-methionine = N(3)-methylpseudouridine(1915) in 23S rRNA + S-adenosyl-L-homocysteine + H(+). Functionally, specifically methylates the pseudouridine at position 1915 (m3Psi1915) in 23S rRNA. This chain is Ribosomal RNA large subunit methyltransferase H, found in Acinetobacter baumannii (strain SDF).